A 325-amino-acid chain; its full sequence is Pyruvate dehydrogenase E1 component subunit beta (325 aa).

Glutamate 60 provides a ligand contact to thiamine diphosphate.

In terms of assembly, heterodimer of an alpha and a beta chain. It depends on thiamine diphosphate as a cofactor.

The protein localises to the cytoplasm. Its subcellular location is the secreted. The catalysed reaction is N(6)-[(R)-lipoyl]-L-lysyl-[protein] + pyruvate + H(+) = N(6)-[(R)-S(8)-acetyldihydrolipoyl]-L-lysyl-[protein] + CO2. Its activity is regulated as follows. Activity of the E1 module is inhibited by the pyruvate dehydrogenase inhibitor PdhI. Functionally, the pyruvate dehydrogenase complex catalyzes the overall conversion of pyruvate to acetyl-CoA and CO(2). It contains multiple copies of three enzymatic components: pyruvate dehydrogenase (E1), dihydrolipoamide acetyltransferase (E2) and lipoamide dehydrogenase (E3). In terms of biological role, the B.subtilis PDH complex also possesses branched-chain 2-oxoacid dehydrogenase (BCDH) activity. This is Pyruvate dehydrogenase E1 component subunit beta from Bacillus subtilis (strain 168).